We begin with the raw amino-acid sequence, 436 residues long: Na(+)/H(+) antiporter NhaA 1 (436 aa).

Helical transmembrane passes span 35–55 (FGGG…NSPW), 80–100 (LATW…GLEL), 116–136 (ALPV…YVGV), 147–167 (GWAI…AVIG), 176–196 (AFLL…IAIF), 201–221 (FKLT…LLVQ), 226–246 (WWWA…ESGV), 283–303 (VSAG…SLRG), 313–333 (PIVV…IFGS), 354–374 (LLGV…IGEL), and 385–405 (VKAA…IVLI).

Belongs to the NhaA Na(+)/H(+) (TC 2.A.33) antiporter family.

It is found in the cell membrane. It catalyses the reaction Na(+)(in) + 2 H(+)(out) = Na(+)(out) + 2 H(+)(in). Functionally, na(+)/H(+) antiporter that extrudes sodium in exchange for external protons. This Salinispora tropica (strain ATCC BAA-916 / DSM 44818 / JCM 13857 / NBRC 105044 / CNB-440) protein is Na(+)/H(+) antiporter NhaA 1.